A 272-amino-acid chain; its full sequence is AA9 family lytic polysaccharide monooxygenase G (272 aa).

The N-terminal stretch at 1-22 is a signal peptide; sequence MKGAGSASFLLTLLSTITRTSA. His23 is a binding site for Cu(2+). Residue Asn60 is glycosylated (N-linked (GlcNAc...) asparagine). 2 cysteine pairs are disulfide-bonded: Cys78–Cys202 and Cys121–Cys125. His110 contributes to the Cu(2+) binding site. His188 and Gln197 together coordinate O2. Tyr199 contacts Cu(2+).

It belongs to the polysaccharide monooxygenase AA9 family. Cu(2+) serves as cofactor.

It is found in the secreted. The enzyme catalyses [(1-&gt;4)-beta-D-glucosyl]n+m + reduced acceptor + O2 = 4-dehydro-beta-D-glucosyl-[(1-&gt;4)-beta-D-glucosyl]n-1 + [(1-&gt;4)-beta-D-glucosyl]m + acceptor + H2O.. Its function is as follows. Lytic polysaccharide monooxygenase (LPMO) that depolymerizes crystalline and amorphous polysaccharides via the oxidation of scissile alpha- or beta-(1-4)-glycosidic bonds, yielding C1 or C4 oxidation products. Catalysis by LPMOs requires the reduction of the active-site copper from Cu(II) to Cu(I) by a reducing agent and H(2)O(2) or O(2) as a cosubstrate. Acts preferentially on crystalline regions of cellulose such as highly crystalline algae cellulose. The sequence is that of AA9 family lytic polysaccharide monooxygenase G from Emericella nidulans (strain FGSC A4 / ATCC 38163 / CBS 112.46 / NRRL 194 / M139) (Aspergillus nidulans).